The following is a 211-amino-acid chain: dITP/XTP pyrophosphatase (211 aa).

Position 7–12 (7–12 (TSNKKK)) interacts with substrate. 2 residues coordinate Mg(2+): E43 and D72. The active-site Proton acceptor is D72. Substrate is bound by residues S73, 169-172 (FGYD), K190, and 195-196 (HR).

This sequence belongs to the HAM1 NTPase family. Homodimer. Mg(2+) serves as cofactor.

It catalyses the reaction XTP + H2O = XMP + diphosphate + H(+). The catalysed reaction is dITP + H2O = dIMP + diphosphate + H(+). The enzyme catalyses ITP + H2O = IMP + diphosphate + H(+). In terms of biological role, pyrophosphatase that catalyzes the hydrolysis of nucleoside triphosphates to their monophosphate derivatives, with a high preference for the non-canonical purine nucleotides XTP (xanthosine triphosphate), dITP (deoxyinosine triphosphate) and ITP. Seems to function as a house-cleaning enzyme that removes non-canonical purine nucleotides from the nucleotide pool, thus preventing their incorporation into DNA/RNA and avoiding chromosomal lesions. In Hydrogenobaculum sp. (strain Y04AAS1), this protein is dITP/XTP pyrophosphatase.